A 339-amino-acid chain; its full sequence is tRNA-splicing endonuclease (339 aa).

Residues Tyr-274, His-285, and Lys-316 contribute to the active site.

The protein belongs to the tRNA-intron endonuclease family. Archaeal long subfamily. Homodimer. Ca(2+) serves as cofactor. It depends on Mg(2+) as a cofactor. Post-translationally, the N-terminus is blocked.

It catalyses the reaction pretRNA = a 3'-half-tRNA molecule with a 5'-OH end + a 5'-half-tRNA molecule with a 2',3'-cyclic phosphate end + an intron with a 2',3'-cyclic phosphate and a 5'-hydroxyl terminus.. Functionally, endonuclease that removes tRNA introns. Cleaves pre-tRNA at the 5'- and 3'-splice sites to release the intron. The products are an intron and two tRNA half-molecules bearing 2',3' cyclic phosphate and 5'-OH termini. Recognizes a pseudosymmetric substrate in which 2 bulged loops of 3 bases are separated by a stem of 4 bp. In Haloferax volcanii (strain ATCC 29605 / DSM 3757 / JCM 8879 / NBRC 14742 / NCIMB 2012 / VKM B-1768 / DS2) (Halobacterium volcanii), this protein is tRNA-splicing endonuclease.